Here is a 323-residue protein sequence, read N- to C-terminus: Transcription factor MafB (323 aa).

Lys32 is covalently cross-linked (Glycyl lysine isopeptide (Lys-Gly) (interchain with G-Cter in SUMO)). Over residues 34–43 (EPLGRAERPG) the composition is skewed to basic and acidic residues. Disordered stretches follow at residues 34-78 (EPLG…PTEQ) and 116-210 (PVPQ…VEDR). The segment covering 54-76 (SLSSTPLSTPCSSVPSSPSFSPT) has biased composition (low complexity). Basic residues-rich tracts occupy residues 129 to 143 (GAHH…HPHH) and 159 to 168 (AHPHHHHHHQ). Residues 192–201 (PHATASATAA) show a composition bias toward low complexity. The interval 238–263 (RLKQKRRTLKNRGYAQSCRYKRVQQK) is basic motif. In terms of domain architecture, bZIP spans 238–301 (RLKQKRRTLK…DAHKVKCEKL (64 aa)). The segment at 266-287 (LENEKTQLIQQVEQLKQEVSRL) is leucine-zipper. Residue Lys297 forms a Glycyl lysine isopeptide (Lys-Gly) (interchain with G-Cter in SUMO) linkage.

This sequence belongs to the bZIP family. Maf subfamily. As to quaternary structure, homodimer or heterodimer with other bHLH-Zip transcription factors. Binds DNA as a homodimer or a heterodimer. Forms homodimers and heterodimers with FOS, FOSB and FOSL2, but not with JUN proteins (JUN, JUNB and JUND). Interacts with PAX6; the interaction is direct. Interacts with ETS1 and LRP1. Interacts with the intracellular cytoplasmic domain of LRP1 (LRPICD); the interaction results in a moderate reduction of MAFB transcriptional potential. Sumoylated. Sumoylation on Lys-32 and Lys-297 stimulates its transcriptional repression activity and promotes macrophage differentiation from myeloid progenitors.

It localises to the nucleus. Acts as a transcriptional activator or repressor. Plays a pivotal role in regulating lineage-specific hematopoiesis by repressing ETS1-mediated transcription of erythroid-specific genes in myeloid cells. Required for monocytic, macrophage, osteoclast, podocyte and islet beta cell differentiation. Involved in renal tubule survival and F4/80 maturation. Activates the insulin and glucagon promoters. Together with PAX6, transactivates weakly the glucagon gene promoter through the G1 element. SUMO modification controls its transcriptional activity and ability to specify macrophage fate. Binds element G1 on the glucagon promoter. Involved either as an oncogene or as a tumor suppressor, depending on the cell context. Required for the transcriptional activation of HOXB3 in the rhombomere r5 in the hindbrain. The polypeptide is Transcription factor MafB (MAFB) (Macaca fascicularis (Crab-eating macaque)).